Here is a 560-residue protein sequence, read N- to C-terminus: SET domain-containing protein 4 (560 aa).

2 disordered regions span residues 1–61 and 125–157; these read MTSP…PSPQ and KKQN…AEDN. Low complexity predominate over residues 26–38; that stretch reads SRSSSYSSNSSMS. A compositionally biased stretch (polar residues) spans 47 to 59; the sequence is LSVSSAASETLPS. Basic and acidic residues predominate over residues 141–157; it reads ESSKENKITPSMRAEDN. The PHD-type zinc-finger motif lies at 160-210; it reads KNGCICGSSDSKDELFIQCNKCKTWQHKLCYAFKKSDPIKRDFVCKRCDSD. Positions 346–475 constitute an SET domain; sequence ADIEVRKSSN…KGEEISVEWQ (130 aa).

It belongs to the SET3 family.

In terms of biological role, putative chromatin regulator. In Saccharomyces cerevisiae (strain ATCC 204508 / S288c) (Baker's yeast), this protein is SET domain-containing protein 4 (SET4).